A 195-amino-acid polypeptide reads, in one-letter code: dTTP/UTP pyrophosphatase (195 aa).

Aspartate 76 acts as the Proton acceptor in catalysis.

Belongs to the Maf family. YhdE subfamily. A divalent metal cation is required as a cofactor.

It localises to the cytoplasm. The catalysed reaction is dTTP + H2O = dTMP + diphosphate + H(+). It catalyses the reaction UTP + H2O = UMP + diphosphate + H(+). Its function is as follows. Nucleoside triphosphate pyrophosphatase that hydrolyzes dTTP and UTP. May have a dual role in cell division arrest and in preventing the incorporation of modified nucleotides into cellular nucleic acids. This is dTTP/UTP pyrophosphatase from Shewanella frigidimarina (strain NCIMB 400).